A 301-amino-acid chain; its full sequence is MDTNSRNRLIKSASYLSVTTALIILSIKLYAWVVTDSQSILAALIDSMLDITSSFINLIALRFALQPPDHHHRFGYEKLQDLTIFSQSIFFFASAFFVGFSSVKSLFEKTKPENISDGTTVMYVCIFLTIILVFYQTYVIKKTGSEIVKADKLHYFTDLLTNVIVIISINLSDYFWFVDPLFGVVISLYIFHSSYSLFKKAFKNLVDHELPEQDRQKIISIVNNHLGAKGMHEMKTRYAGQKAFIQCHLEMDGNMSLYNAHKISDEIAFEILQEFPEAEIIIHQDPFGIEEHVKYREYIVR.

The next 5 helical transmembrane spans lie at 15-35 (YLSVTTALIILSIKLYAWVVT), 40-60 (ILAALIDSMLDITSSFINLIA), 83-103 (TIFSQSIFFFASAFFVGFSSV), 120-140 (TVMYVCIFLTIILVFYQTYVI), and 171-191 (LSDYFWFVDPLFGVVISLYIF).

It belongs to the cation diffusion facilitator (CDF) transporter (TC 2.A.4) family.

The protein resides in the cell membrane. The chain is Protein p34 (p34) from Rickettsia rickettsii (strain Sheila Smith).